The sequence spans 469 residues: MTLLTASSRAAARLLGAKNSSCIIFAARHASTSTNLKDVLANMIPKEQARIKSFRQQYGSTVIGQITVDMLYGGMRGMKGLIYETSVLDPDEGIRFRGYSIPECQKLLPKAPGGAEPLPEGLFWLLVTGEIPSQEQVNWVSREWAKRAALPSHVVTMLDNFPTNLHPMSQLSAAVTALNSESTFARAYSEGISRTKYWEFIYEDSMDLIAKLPCIAAKIYRNLYREGSSIGAIDPALDWSHNFTNMLGYTDTQFIELMRLYLTIHSDHEGGNVSAHTSHLVGSALSDPYLAFAAAMNGLAGPLHGLANQEVLVWLTNLQKELGEDVSDQKLRDFIWNTLNSGRVVPGYGHAVLRKTDPRYTCQREFALKHLPKDPLFKLVAQLYKIVPNVLLEQGKAKNPWPNVDAHSGVLLQYYGMKEMNYYTVLFGVSRALGVLSQLIWSRALGFPLERPKSMSTDGLMVLVGAKSV.

Residues 1–31 (MTLLTASSRAAARLLGAKNSSCIIFAARHAS) constitute a mitochondrion transit peptide. Active-site residues include H304 and H350. R359 serves as a coordination point for oxaloacetate. Residue D405 is part of the active site. Positions 431 and 451 each coordinate oxaloacetate.

This sequence belongs to the citrate synthase family. As to quaternary structure, homodimer.

It localises to the mitochondrion matrix. It carries out the reaction oxaloacetate + acetyl-CoA + H2O = citrate + CoA + H(+). It participates in carbohydrate metabolism; tricarboxylic acid cycle; isocitrate from oxaloacetate: step 1/2. Key enzyme of the Krebs tricarboxylic acid cycle which catalyzes the synthesis of citrate from acetyl coenzyme A and oxaloacetate. The sequence is that of Citrate synthase, mitochondrial (CS) from Amblyrhynchus cristatus (Galapagos marine iguana).